Consider the following 302-residue polypeptide: Homoserine O-acetyltransferase (302 aa).

Cys-142 (acyl-thioester intermediate) is an active-site residue. 2 residues coordinate substrate: Lys-163 and Ser-192. The active-site Proton acceptor is His-235. Residue Glu-237 is part of the active site. Arg-249 contributes to the substrate binding site.

The protein belongs to the MetA family.

The protein resides in the cytoplasm. The catalysed reaction is L-homoserine + acetyl-CoA = O-acetyl-L-homoserine + CoA. It functions in the pathway amino-acid biosynthesis; L-methionine biosynthesis via de novo pathway; O-acetyl-L-homoserine from L-homoserine: step 1/1. Its function is as follows. Transfers an acetyl group from acetyl-CoA to L-homoserine, forming acetyl-L-homoserine. The chain is Homoserine O-acetyltransferase from Bacillus licheniformis (strain ATCC 14580 / DSM 13 / JCM 2505 / CCUG 7422 / NBRC 12200 / NCIMB 9375 / NCTC 10341 / NRRL NRS-1264 / Gibson 46).